The primary structure comprises 309 residues: Beta-lactamase (309 aa).

An N-terminal signal peptide occupies residues 1–28; that stretch reads MMILKNKRMLKIGICVGILGLSITSLEA. Catalysis depends on serine 92, which acts as the Acyl-ester intermediate. Glutamate 188 (proton acceptor) is an active-site residue. Position 254-256 (254-256) interacts with substrate; that stretch reads KSG.

It belongs to the class-A beta-lactamase family.

It carries out the reaction a beta-lactam + H2O = a substituted beta-amino acid. This protein is a beta-lactamase with a substrate specificity for penicillins. The chain is Beta-lactamase (bla) from Bacillus thuringiensis.